A 238-amino-acid chain; its full sequence is Pyridoxine 5'-phosphate synthase (238 aa).

3-amino-2-oxopropyl phosphate contacts are provided by Asn7 and Arg18. Residue His43 is the Proton acceptor of the active site. Residues Arg45 and His50 each contribute to the 1-deoxy-D-xylulose 5-phosphate site. Glu70 (proton acceptor) is an active-site residue. Thr100 is a binding site for 1-deoxy-D-xylulose 5-phosphate. His190 functions as the Proton donor in the catalytic mechanism. 3-amino-2-oxopropyl phosphate is bound by residues Asp191 and 213–214; that span reads GH.

The protein belongs to the PNP synthase family. As to quaternary structure, homooctamer; tetramer of dimers.

It localises to the cytoplasm. The enzyme catalyses 3-amino-2-oxopropyl phosphate + 1-deoxy-D-xylulose 5-phosphate = pyridoxine 5'-phosphate + phosphate + 2 H2O + H(+). It participates in cofactor biosynthesis; pyridoxine 5'-phosphate biosynthesis; pyridoxine 5'-phosphate from D-erythrose 4-phosphate: step 5/5. Catalyzes the complicated ring closure reaction between the two acyclic compounds 1-deoxy-D-xylulose-5-phosphate (DXP) and 3-amino-2-oxopropyl phosphate (1-amino-acetone-3-phosphate or AAP) to form pyridoxine 5'-phosphate (PNP) and inorganic phosphate. The chain is Pyridoxine 5'-phosphate synthase from Cytophaga hutchinsonii (strain ATCC 33406 / DSM 1761 / CIP 103989 / NBRC 15051 / NCIMB 9469 / D465).